We begin with the raw amino-acid sequence, 125 residues long: uncharacterized protein (125 aa).

The transit peptide at 1–46 (MFFDTKVLNYPTIHKSISMASTMQRTSSSAASNERQLSQLQRRAPS) directs the protein to the chloroplast.

Its subcellular location is the plastid. It is found in the chloroplast. This is an uncharacterized protein from Arabidopsis thaliana (Mouse-ear cress).